The chain runs to 202 residues: Ribosome maturation factor RimP (202 aa).

This sequence belongs to the RimP family.

Its subcellular location is the cytoplasm. In terms of biological role, required for maturation of 30S ribosomal subunits. This chain is Ribosome maturation factor RimP, found in Paracidovorax citrulli (strain AAC00-1) (Acidovorax citrulli).